Here is a 272-residue protein sequence, read N- to C-terminus: 3-keto-5-aminohexanoate cleavage enzyme (272 aa).

Glu15 is a binding site for (5S)-5-amino-3-oxohexanoate. Zn(2+) contacts are provided by His47 and His49. Residues Ser83, Gly86, and Thr107 each contribute to the (5S)-5-amino-3-oxohexanoate site. Glu226 is a Zn(2+) binding site.

This sequence belongs to the BKACE family. Kce subfamily. As to quaternary structure, homotetramer. The cofactor is Zn(2+).

It carries out the reaction (5S)-5-amino-3-oxohexanoate + acetyl-CoA = (3S)-3-aminobutanoyl-CoA + acetoacetate. The protein operates within amino-acid degradation; L-lysine degradation via acetate pathway. 3-fold increase in activity by addition of 10 mM 2-mercaptoethanol. Addition of CoCl(2) and to a lesser extent MnCl(2) increases the activity but not MgCl(2). Inhibited by phosphate buffer but not by 5,5'-dithio-2-nitrobenzoic acid. Its function is as follows. Involved in the anaerobic fermentation of lysine. Catalyzes the reversible reaction between 3-keto-5-aminohexanoate (KAH) and acetyl-CoA to form 3-aminobutyryl-CoA and acetoacetate. The reaction involves the deprotonation of KAH, the nucleophilic addition onto acetyl-CoA and the intramolecular transfer of the CoA moiety. It can also use beta-alanyl-CoA as substrate. The polypeptide is 3-keto-5-aminohexanoate cleavage enzyme (Fusobacterium nucleatum subsp. nucleatum (strain ATCC 25586 / DSM 15643 / BCRC 10681 / CIP 101130 / JCM 8532 / KCTC 2640 / LMG 13131 / VPI 4355)).